The following is a 396-amino-acid chain: Probable sugar efflux transporter (396 aa).

12 helical membrane-spanning segments follow: residues 15–35, 50–70, 81–101, 103–123, 136–156, 170–190, 209–229, 246–266, 275–295, 299–319, 333–353, and 364–384; these read VVTL…PVGL, VGIM…PFML, LICL…SWSF, VLVI…SITA, AQAL…GLPL, FFAI…LLPL, PALM…YTAY, FATA…VIFG, ALVS…LPAA, IHLG…GLGM, VAMA…ALVG, and MIGY…IIIF.

This sequence belongs to the major facilitator superfamily. SotB (TC 2.A.1.2) family.

It is found in the cell inner membrane. In terms of biological role, involved in the efflux of sugars. The physiological role may be the reduction of the intracellular concentration of toxic sugars or sugar metabolites. This chain is Probable sugar efflux transporter, found in Escherichia coli O139:H28 (strain E24377A / ETEC).